The chain runs to 189 residues: Putative manganese efflux pump MntP (189 aa).

A run of 6 helical transmembrane segments spans residues proline 3–glycine 23, leucine 41–alanine 61, aspartate 69–isoleucine 89, phenylalanine 105–glycine 125, isoleucine 133–methionine 153, and isoleucine 168–alanine 188.

Belongs to the MntP (TC 9.B.29) family.

It is found in the cell inner membrane. Functionally, probably functions as a manganese efflux pump. The polypeptide is Putative manganese efflux pump MntP (Pseudomonas savastanoi pv. phaseolicola (strain 1448A / Race 6) (Pseudomonas syringae pv. phaseolicola (strain 1448A / Race 6))).